A 301-amino-acid chain; its full sequence is Homoserine O-acetyltransferase (301 aa).

Cysteine 142 (acyl-thioester intermediate) is an active-site residue. Substrate is bound by residues lysine 163 and serine 192. Histidine 235 serves as the catalytic Proton acceptor. Glutamate 237 is an active-site residue. Arginine 249 is a substrate binding site.

This sequence belongs to the MetA family.

Its subcellular location is the cytoplasm. The enzyme catalyses L-homoserine + acetyl-CoA = O-acetyl-L-homoserine + CoA. Its pathway is amino-acid biosynthesis; L-methionine biosynthesis via de novo pathway; O-acetyl-L-homoserine from L-homoserine: step 1/1. Its function is as follows. Transfers an acetyl group from acetyl-CoA to L-homoserine, forming acetyl-L-homoserine. The protein is Homoserine O-acetyltransferase of Succinatimonas hippei (strain DSM 22608 / JCM 16073 / KCTC 15190 / YIT 12066).